The chain runs to 164 residues: Cell division protein SepF (164 aa).

Positions 21–71 (YQQGQQPAQQQQSPVQAVPTPAPAPQQQAKRAPVTPLHKPSTTTRNAAPAE) are disordered. A compositionally biased stretch (low complexity) spans 22-54 (QQGQQPAQQQQSPVQAVPTPAPAPQQQAKRAPV).

Belongs to the SepF family. As to quaternary structure, homodimer. Interacts with FtsZ.

It is found in the cytoplasm. Its function is as follows. Cell division protein that is part of the divisome complex and is recruited early to the Z-ring. Probably stimulates Z-ring formation, perhaps through the cross-linking of FtsZ protofilaments. Its function overlaps with FtsA. The chain is Cell division protein SepF from Clavibacter michiganensis subsp. michiganensis (strain NCPPB 382).